The following is a 627-amino-acid chain: Phosphomethylpyrimidine synthase (627 aa).

The segment covering methionine 1–proline 24 has biased composition (polar residues). A disordered region spans residues methionine 1–valine 29. Residues asparagine 231, methionine 260, tyrosine 289, histidine 325, serine 345–glycine 347, aspartate 386–arginine 389, and glutamate 425 contribute to the substrate site. Histidine 429 provides a ligand contact to Zn(2+). Tyrosine 452 contributes to the substrate binding site. Histidine 493 contributes to the Zn(2+) binding site. 3 residues coordinate [4Fe-4S] cluster: cysteine 573, cysteine 576, and cysteine 581.

The protein belongs to the ThiC family. In terms of assembly, homodimer. [4Fe-4S] cluster serves as cofactor.

The catalysed reaction is 5-amino-1-(5-phospho-beta-D-ribosyl)imidazole + S-adenosyl-L-methionine = 4-amino-2-methyl-5-(phosphooxymethyl)pyrimidine + CO + 5'-deoxyadenosine + formate + L-methionine + 3 H(+). Its pathway is cofactor biosynthesis; thiamine diphosphate biosynthesis. Functionally, catalyzes the synthesis of the hydroxymethylpyrimidine phosphate (HMP-P) moiety of thiamine from aminoimidazole ribotide (AIR) in a radical S-adenosyl-L-methionine (SAM)-dependent reaction. In Pseudomonas aeruginosa (strain LESB58), this protein is Phosphomethylpyrimidine synthase.